The following is a 230-amino-acid chain: Urease accessory protein UreF (230 aa).

It belongs to the UreF family. In terms of assembly, ureD, UreF and UreG form a complex that acts as a GTP-hydrolysis-dependent molecular chaperone, activating the urease apoprotein by helping to assemble the nickel containing metallocenter of UreC. The UreE protein probably delivers the nickel.

It is found in the cytoplasm. Its function is as follows. Required for maturation of urease via the functional incorporation of the urease nickel metallocenter. The protein is Urease accessory protein UreF of Cupriavidus necator (strain ATCC 17699 / DSM 428 / KCTC 22496 / NCIMB 10442 / H16 / Stanier 337) (Ralstonia eutropha).